The chain runs to 285 residues: Complex I assembly factor TIMMDC1, mitochondrial (285 aa).

A run of 4 helical transmembrane segments spans residues 80–100, 137–159, 165–185, and 188–208; these read AAVS…FIYA, RWSW…LTVY, MSHF…NLGV, and LVAG…LLMA. The interval 265 to 285 is disordered; the sequence is RIEELLSLPRNPSSPHQQSKH. A compositionally biased stretch (polar residues) spans 274–285; it reads RNPSSPHQQSKH. Position 277 is a phosphoserine (Ser-277).

Belongs to the Tim17/Tim22/Tim23 family. Associates with the intermediate 315 kDa subcomplex of incompletely assembled complex I. Interacts with TMEM70.

The protein resides in the mitochondrion membrane. Chaperone protein involved in the assembly of the mitochondrial NADH:ubiquinone oxidoreductase complex (complex I). Participates in constructing the membrane arm of complex I. This Mus musculus (Mouse) protein is Complex I assembly factor TIMMDC1, mitochondrial.